A 366-amino-acid chain; its full sequence is MAAVNTVSSLPCSKAGAAVAGGAPRPSTCSVFYPPRCWSKRSSGNGVRAQASTTETTAAPAAEVTTKVEKVSKKQVDGVVTNKYRPKEPYTGRCLLNTRITGDDAPGETWHMVFSTDGEIPYREGQSIGVIPDGIDKNGKPHKLRLYSIASSAIGDFADSKTVSLCVKRLVYTNDKGEIVKGVCSNFLCDLKPGSDVKITGPVGKEMLMPKDPNATIIMLGTGTGIAPFRSFLWKMFFEEHDDYRFNGLAWLFLGVPTSSTLLYREEFERMKEIAPERFRLDFAVSREQTNAAGEKMYIQTRMAEYKDELWELLKKDNTYVYMCGLKGMEKGIDDIMIDLAAKDGIDWLDYKKQLKKSEQWNVEVY.

A chloroplast-targeting transit peptide spans 1–48 (MAAVNTVSSLPCSKAGAAVAGGAPRPSTCSVFYPPRCWSKRSSGNGVR). Residues 87–209 (KEPYTGRCLL…TGPVGKEMLM (123 aa)) enclose the FAD-binding FR-type domain. FAD contacts are provided by residues 145–148 (RLYS), 166–168 (CVK), Y172, and 183–185 (VCS). S148 and K168 together coordinate NADP(+). An intrachain disulfide couples C184 to C189. S185 carries the phosphoserine modification. At T216 the chain carries Phosphothreonine. Residue T224 participates in FAD binding. NADP(+) is bound by residues T224, 256–257 (VP), 286–287 (SR), K296, 325–326 (GL), and E364.

Belongs to the ferredoxin--NADP reductase type 1 family. As to quaternary structure, heterodimer with LFNR1. Component of high molecular weight thylakoid LFNRs-containing protein complexes containing LIR1, LFNR1, LFNR2, TIC62 and TROL proteins. Interacts directly with LFNR1 and LFNR2; LIR1 increases the affinity of LFNR1 and LFNR2 for TIC62 and subsequent thylakoid relocalization. The cofactor is FAD. Post-translationally, may form interchain disulfide bonds with LIR1.

Its subcellular location is the plastid. The protein resides in the chloroplast stroma. It is found in the chloroplast thylakoid membrane. It catalyses the reaction 2 reduced [2Fe-2S]-[ferredoxin] + NADP(+) + H(+) = 2 oxidized [2Fe-2S]-[ferredoxin] + NADPH. Its pathway is energy metabolism; photosynthesis. Its function is as follows. Plays a key role in regulating the relative amounts of cyclic and non-cyclic electron flow to meet the demands of the plant for ATP and reducing power. The sequence is that of Ferredoxin--NADP reductase, leaf isozyme 2, chloroplastic from Oryza sativa subsp. indica (Rice).